Reading from the N-terminus, the 1077-residue chain is Teashirt homolog 1 (1077 aa).

3 disordered regions span residues 1-109 (MPRR…VSYP), 139-195 (SGST…SSSS), and 269-298 (GHYRDDNRDKDSEKTKRWSKPRKRSLMEME). Acidic residues predominate over residues 26–36 (IDEEHVEDDGL). Composition is skewed to polar residues over residues 57-71 (QSYQNSPVSSATNQD) and 139-152 (SGSTTSTNDASQKE). The segment covering 164 to 195 (PVSTTGPTTSTPSTSCSSSTSHSSTTSTSSSS) has biased composition (low complexity). 2 consecutive C2H2-type zinc fingers follow at residues 246–270 (FRCKDCSAAYDTLVELTVHMNETGH) and 307–331 (LKCMYCGHSFESLQDLSVHMIKTKH). Positions 269–284 (GHYRDDNRDKDSEKTK) are enriched in basic and acidic residues. The C2H2-type 3; atypical zinc-finger motif lies at 416-440 (LKCMECGSSHDTLQQLTAHMMVTGH). 2 disordered regions span residues 467 to 549 (SIPL…KGGL) and 647 to 720 (TGKV…EPLK). Basic and acidic residues-rich tracts occupy residues 496–528 (SEEKKEPEKEKPPVAGDAEKIKEESEDSLEKFE), 647–665 (TGKVNIKKEERPPEKEKSS), and 675–708 (KENKDFPKTEEVSGKPQKKGPEAETGKAKKEGPL). S765 carries the phosphoserine modification. Positions 848 to 873 (TGRLTPKSSTPSTVSEKSDADGSSFE) are disordered. Residues 853 to 862 (PKSSTPSTVS) show a composition bias toward polar residues. Residues 885-955 (RKGRQSNWNP…NVKYQLRRTG (71 aa)) constitute a DNA-binding region (homeobox; atypical). 2 C2H2-type zinc fingers span residues 970–992 (FFCNDCASQFRTASTYISHLETH) and 1037–1060 (FQCKLCNRTFASKHAVKLHLSKTH).

It belongs to the teashirt C2H2-type zinc-finger protein family. As to quaternary structure, interacts (via homeobox domain) with APBB1 (via PID domain 1). Expressed in brain; strongly reduced in post-mortem elderly subjects with Alzheimer disease.

The protein resides in the nucleus. Probable transcriptional regulator involved in developmental processes. May act as a transcriptional repressor (Potential). This chain is Teashirt homolog 1 (TSHZ1), found in Homo sapiens (Human).